A 300-amino-acid chain; its full sequence is ClpXP adapter protein SpxH (300 aa).

This sequence belongs to the SpxH family. In terms of assembly, interacts with Spx.

The protein resides in the cytoplasm. In terms of biological role, adapter protein required for efficient degradation of Spx by ClpXP under non-stress conditions. Interaction with Spx stabilizes Spx and exposes the C-terminus of Spx for recognition and proteolysis by ClpXP. The chain is ClpXP adapter protein SpxH from Shouchella clausii (strain KSM-K16) (Alkalihalobacillus clausii).